The sequence spans 299 residues: Plant-type L-asparaginase (299 aa).

Residue Thr169 is the Nucleophile of the active site. Substrate-binding positions include 197-200 and 220-223; these read RVGD and TGVG.

The protein belongs to the Ntn-hydrolase family. As to quaternary structure, heterotetramer of two alpha and two beta chains arranged as a dimer of alpha/beta heterodimers. The uncleaved protein forms homodimers. In terms of processing, autocleaved. Generates the alpha and beta subunits. The N-terminal residue of the beta subunit is thought to be responsible for the nucleophile hydrolase activity.

It catalyses the reaction L-asparagine + H2O = L-aspartate + NH4(+). With respect to regulation, divalent metal ions and EDTA do not have significant effect on enzyme activity, indicating that activity is metal-independent. Catalyzes the hydrolysis of L-asparagine into L-aspartate and ammonia. Also displays D-asparaginase activity, which is about 20% of the L-asparaginase activity. Does not exhibit glutaminase activity. The polypeptide is Plant-type L-asparaginase (Pyrobaculum calidifontis (strain DSM 21063 / JCM 11548 / VA1)).